The chain runs to 1286 residues: ABC transporter B family member 1 (1286 aa).

The next 2 helical transmembrane spans lie at 42-62 (VLMG…PLFL) and 93-113 (FLVV…CWMW). Residues 44 to 333 (MGIGSVGAFV…SAPSMAAFAK (290 aa)) form the ABC transmembrane type-1 1 domain. Position 139 (D139) interacts with ATP. A run of 2 helical transmembrane segments spans residues 166–186 (LGNF…GFTA) and 187–207 (VWQL…IGGI). A glycan (N-linked (GlcNAc...) asparagine) is linked at N217. The next 2 membrane-spanning stretches (helical) occupy residues 277 to 297 (ATYF…GYLV) and 301 to 321 (LTNG…GLAL). Y286 serves as a coordination point for brassinolide. One can recognise an ABC transporter 1 domain in the interval 368–604 (VELKNVDFSY…GENGVYAKLI (237 aa)). Residues Y377, S379, R380, G408, K409, S410, and T411 each contribute to the ATP site. A disordered region spans residues 614-647 (AMSNARKSSARPSSARNSVSSPIMTRNSSYGRSP). Positions 616-635 (SNARKSSARPSSARNSVSSP) are enriched in low complexity. N-linked (GlcNAc...) asparagine glycosylation is present at N640. The ABC transmembrane type-1 2 domain occupies 700 to 988 (ALLGSVGSVI…TLTLAPDFIK (289 aa)). Helical transmembrane passes span 705 to 725 (VGSV…SAVL) and 745 to 765 (YLLI…HSFW). N771 carries an N-linked (GlcNAc...) asparagine glycan. An ATP-binding site is contributed by D793. The N-linked (GlcNAc...) asparagine glycan is linked to N797. The next 4 membrane-spanning stretches (helical) occupy residues 821–843 (ISVI…VLQW), 845–867 (LALV…KMFM), 932–952 (VAQF…SWLV), and 967–987 (MVLM…PDFI). Residues Y941 and E978 each coordinate brassinolide. One can recognise an ABC transporter 2 domain in the interval 1024-1260 (VELKHIDFSY…HPDGIYARMI (237 aa)). ATP is bound by residues Y1033, R1036, G1064, K1065, and S1066. Residues 1049 to 1286 (ARAGKTLALV…SSSRVKEDDA (238 aa)) form an interaction with FKBP42/TWD1 region.

This sequence belongs to the ABC transporter superfamily. ABCB family. Multidrug resistance exporter (TC 3.A.1.201) subfamily. As to quaternary structure, interacts with 1-naphthylphthalamic acid (NPA) and FKBP42/TWD1. Ubiquitous, with high levels in peduncles. Mostly localized in young developing tissues, including meristems, as well as root and shoot apices.

Its subcellular location is the cell membrane. The enzyme catalyses (indol-3-yl)acetate(in) + ATP + H2O = (indol-3-yl)acetate(out) + ADP + phosphate + H(+). It catalyses the reaction brassinolide(in) + ATP + H2O = brassinolide(out) + ADP + phosphate + H(+). It carries out the reaction 24-epi-brassinolide(in) + ATP + H2O = 24-epi-brassinolide(out) + ADP + phosphate + H(+). The catalysed reaction is 24-epi-castasterone(in) + ATP + H2O = 24-epi-castasterone(out) + ADP + phosphate + H(+). The enzyme catalyses castasterone(in) + ATP + H2O = castasterone(out) + ADP + phosphate + H(+). Transport capacity is stimulated by the chaperone protein FKBP42/TWD1. Transport activity inhibited by 1-N-naphthylphthalamic acid (NPA), cyclopropyl propane dione (CPD), cyclosporin A, verapamil and quercetin. ATPase activity is specifically activated by bioactive brassinosteroids in a dose-dependent manner, including brassinolide (BL), 24-epiBL, 24-epicastasterone (24-epiCS) and castasterone-alkyne; BL binding leads to structural changes. Inhibited by vanadate. Functionally, brassinosteroid exporter that, in conjunction with ABCB19, supports the accumulation of exogenous brassinosteroids (BR) in the apoplast, thus promoting BR signaling initiation involving the specific receptor BRI1 and required for plant growth and stress responses. Auxin efflux transporter that acts as a negative regulator of light signaling to promote hypocotyl elongation. May contribute to the regulation of leaf position and morphology during PHOT1-mediated blue light responses involving auxin distribution, especially in low light fluence. Together with ABCB19 and in a FKBP42/TWD1-dependent manner, supports seed development by promoting stamen elongation and, to a lesser extent, anther dehiscence and pollen maturation, probably as auxin transporters. Mediates the accumulation of chlorophyll and anthocyanin, as well as the expression of genes in response to light. Participates directly in auxin efflux and thus regulates the polar (presumably basipetal) auxin transport (from root tips to root elongating zone). Also transports some auxin metabolites such as oxindoleacetic acid and indoleacetaldehyde. Involved in diverse auxin-mediated responses including gravitropism, phototropism and lateral root formation. Confers resistance to herbicides such as dicamba, pendimethalin, oryzalin, and monosodium acid methanearsonate (MSMA), but not to herbicides such as glyphosate, atrazine, bentazon and fluazifop-p-butyl. Also mediates resistance to xenobiotics such as cycloheximide and the cytokinin N6-(2-isopentenyl)adenine (2IP). This chain is ABC transporter B family member 1, found in Arabidopsis thaliana (Mouse-ear cress).